Reading from the N-terminus, the 444-residue chain is Enolase 1 (444 aa).

Residues histidine 165 and glutamate 174 each coordinate substrate. Catalysis depends on glutamate 217, which acts as the Proton donor. 2 residues coordinate substrate: glutamate 303 and aspartate 330. Catalysis depends on lysine 355, which acts as the Proton acceptor. Substrate contacts are provided by residues 382–385 (SHRS) and lysine 406.

This sequence belongs to the enolase family. As to quaternary structure, homodimer. The cofactor is Mg(2+).

The protein resides in the cytoplasm. The enzyme catalyses (2R)-2-phosphoglycerate = phosphoenolpyruvate + H2O. It functions in the pathway carbohydrate degradation; glycolysis; pyruvate from D-glyceraldehyde 3-phosphate: step 4/5. This is Enolase 1 (ENO1) from Toxoplasma gondii.